The sequence spans 633 residues: Pescadillo homolog (633 aa).

The region spanning 321 to 414 is the BRCT domain; sequence RLRTLFKGLK…QLLPTNKYFL (94 aa). 2 disordered regions span residues 450–470 and 490–567; these read HAQS…DTVE and KKYG…LQAR. Phosphoserine occurs at positions 453 and 457. Acidic residues-rich tracts occupy residues 454–470 and 498–526; these read EDES…DTVE and VNED…EELD. Residues 527–538 show a composition bias toward basic and acidic residues; sequence EKEKRLLEEKQK. The span at 545 to 554 shows a compositional bias: basic residues; the sequence is KVHKVNKRQV. A compositionally biased stretch (basic and acidic residues) spans 555–564; that stretch reads HKAEVDEHRL. The stretch at 593 to 626 forms a coiled coil; that stretch reads LLRKKRRTIETDAKEAKKLAKREARKAAAAAAAA.

This sequence belongs to the pescadillo family.

It localises to the nucleus. The protein resides in the nucleolus. It is found in the nucleoplasm. In terms of biological role, required for maturation of ribosomal RNAs and formation of the large ribosomal subunit. The chain is Pescadillo homolog from Drosophila virilis (Fruit fly).